The sequence spans 85 residues: Beta-insect depressant toxin LqhIT2 (85 aa).

Residues 1–21 form the signal peptide; it reads MKLLLLLIVSASMLIESLVNA. The LCN-type CS-alpha/beta domain occupies 22–82; the sequence is DGYIKRRDGC…TWKSETNTCG (61 aa). Cystine bridges form between cysteine 31-cysteine 81, cysteine 35-cysteine 56, cysteine 42-cysteine 63, and cysteine 46-cysteine 65. Residue glycine 82 is modified to Glycine amide.

It belongs to the long (4 C-C) scorpion toxin superfamily. Sodium channel inhibitor family. Beta subfamily. Expressed by the venom gland.

It is found in the secreted. Functionally, depressant insect beta-toxins cause a transient contraction paralysis followed by a slow flaccid paralysis. They bind voltage-independently at site-4 of sodium channels (Nav) and shift the voltage of activation toward more negative potentials thereby affecting sodium channel activation and promoting spontaneous and repetitive firing. This toxin is active only on insects. The protein is Beta-insect depressant toxin LqhIT2 of Leiurus hebraeus (Hebrew deathstalker scorpion).